Reading from the N-terminus, the 356-residue chain is DNA polymerase IV (356 aa).

The UmuC domain occupies 7-188; the sequence is IIHIDMDAFY…IPVTKFYGVG (182 aa). Mg(2+)-binding residues include D11 and D106. E107 is a catalytic residue.

It belongs to the DNA polymerase type-Y family. Monomer. Mg(2+) is required as a cofactor.

The protein localises to the cytoplasm. It catalyses the reaction DNA(n) + a 2'-deoxyribonucleoside 5'-triphosphate = DNA(n+1) + diphosphate. Functionally, poorly processive, error-prone DNA polymerase involved in untargeted mutagenesis. Copies undamaged DNA at stalled replication forks, which arise in vivo from mismatched or misaligned primer ends. These misaligned primers can be extended by PolIV. Exhibits no 3'-5' exonuclease (proofreading) activity. May be involved in translesional synthesis, in conjunction with the beta clamp from PolIII. The chain is DNA polymerase IV from Listeria monocytogenes serotype 4a (strain HCC23).